The chain runs to 189 residues: Hypoxanthine/guanine phosphoribosyltransferase (189 aa).

This sequence belongs to the purine/pyrimidine phosphoribosyltransferase family. Archaeal HPRT subfamily. As to quaternary structure, homodimer.

The protein localises to the cytoplasm. It catalyses the reaction IMP + diphosphate = hypoxanthine + 5-phospho-alpha-D-ribose 1-diphosphate. The enzyme catalyses GMP + diphosphate = guanine + 5-phospho-alpha-D-ribose 1-diphosphate. It participates in purine metabolism; IMP biosynthesis via salvage pathway; IMP from hypoxanthine: step 1/1. Its function is as follows. Catalyzes a salvage reaction resulting in the formation of IMP that is energically less costly than de novo synthesis. The sequence is that of Hypoxanthine/guanine phosphoribosyltransferase from Methanothrix soehngenii (strain ATCC 5969 / DSM 3671 / JCM 10134 / NBRC 103675 / OCM 69 / GP-6) (Methanosaeta concilii).